We begin with the raw amino-acid sequence, 638 residues long: NBPF family member NBPF6 (638 aa).

Coiled-coil stretches lie at residues 10-43 (SERAEMNILEINQELRSQLAESNQQFRDLKEKFL) and 69-115 (DSVL…KLRE). The interval 157-285 (HLVHKLSPEN…VPPRHHDKSN (129 aa)) is disordered. Residues 165–179 (ENDEDEDEDEDDKDE) show a composition bias toward acidic residues. An Olduvai 1 domain is found at 174 to 261 (EDDKDEEVEK…EEEEALNIPP (88 aa)). Positions 192-202 (EVQKTEEKEVP) are enriched in basic and acidic residues. A compositionally biased stretch (low complexity) spans 214-226 (SNSHNPSNSNQPH). Composition is skewed to basic and acidic residues over residues 232-251 (TFKEHEVDSALVVESEHPHD) and 264-273 (QNDHEEEEGK). Olduvai domains lie at 326–399 (EKQS…ALVD) and 400–503 (KIKK…SQAQ). The tract at residues 563 to 584 (MKNPPQLEDDALEGSASNTQGR) is disordered.

The protein belongs to the NBPF family.

Its subcellular location is the cytoplasm. This Homo sapiens (Human) protein is NBPF family member NBPF6.